The chain runs to 252 residues: Endonuclease NucS (252 aa).

It belongs to the NucS endonuclease family.

The protein localises to the cytoplasm. Functionally, cleaves both 3' and 5' ssDNA extremities of branched DNA structures. The protein is Endonuclease NucS of Thermococcus kodakarensis (strain ATCC BAA-918 / JCM 12380 / KOD1) (Pyrococcus kodakaraensis (strain KOD1)).